We begin with the raw amino-acid sequence, 81 residues long: Defensin-like protein 313 (81 aa).

The signal sequence occupies residues 1 to 32 (MESKRSSSSPLLILITTIMIIFIISGPKSVDA). 3 disulfides stabilise this stretch: C34/C63, C45/C74, and C49/C76.

This sequence belongs to the DEFL family.

The protein resides in the secreted. In Arabidopsis thaliana (Mouse-ear cress), this protein is Defensin-like protein 313.